We begin with the raw amino-acid sequence, 189 residues long: Protein Rex (189 aa).

The segment covering 1–16 (MPKTRRRPRRSQRKRP) has biased composition (basic residues). The segment at 1–28 (MPKTRRRPRRSQRKRPPTPWPTSQGLDR) is disordered. The Nuclear localization signal, and RNA-binding (RxRE) motif lies at 2 to 18 (PKTRRRPRRSQRKRPPT). The segment at 56–70 (RPVYIVTPYWPPVQS) is homomultimerization. The residue at position 70 (S70) is a Phosphoserine; by host. Positions 82–93 (LSAQLYSSLSLD) match the Nuclear export signal motif. Residues 84-94 (AQLYSSLSLDS) are compositionally biased toward low complexity. Residues 84 to 189 (AQLYSSLSLD…PPSPGPSCPT (106 aa)) form a disordered region. Positions 111–125 (RRPPIQPPTFHPPSS) are enriched in pro residues. A homomultimerization region spans residues 123–131 (PSSRPCANT). Over residues 127–164 (PCANTPPSETDTWNPPLGSTSQPCLFQTPASGPKTCTP) the composition is skewed to polar residues. T174 bears the Phosphothreonine; by host mark. At S177 the chain carries Phosphoserine; by host. Pro residues predominate over residues 178–189 (FPPPSPGPSCPT).

It belongs to the deltaretrovirus Rex protein family. Homomultimer. Multimeric assembly is essential for activity and involves XPO1. Binds to human XPO1 and KPNB1. Interacts (via N-terminal nuclear localization signal) with human NPM1. Post-translationally, phosphorylated.

The protein resides in the host nucleus. It localises to the host nucleolus. The protein localises to the host cytoplasm. Its function is as follows. Rex escorts unspliced gag-pro-pol and singly spliced env mRNAs out of the nucleus of infected cells. These mRNAs carry a recognition sequence called Rex responsive element (RxRE or XRE) located at the 3' region of the long terminal repeat (LTR). This function is essential since most HTLV proteins are translated from unspliced or partially spliced pre-mRNAs that cannot exit the nucleus by the pathway used by fully processed cellular mRNAs. Rex itself is translated from a fully spliced mRNA that probably readily exits the nucleus. Rex's nuclear localization signal (NLS) binds directly to KPNB1/importin beta-1 without previous binding to KPNA1/importin alpha-1. KPNB1 binds to the GDP bound form of RAN (Ran-GDP) and targets Rex to the nucleus. In the nucleus, the conversion from Ran-GDP to Ran-GTP dissociates Rex from KPNB1 and allows Rex's binding to the RRE in viral pre-mRNAs. Rex multimerizes on the RRE via cooperative assembly. This multimerization is critical for its full biological activity, since it may shield the viral RNA from being spliced or down-regulated, and probably exposes Rex's nuclear export signal (NES) to the surface. Rex can then form a complex with XPO1/CRM1, RANBP3 and Ran-GTP, leading to nuclear export of the complex. Conversion from Ran-GTP to Ran-GDP mediates dissociation of the Rex/RRE/XPO1/RANBP3/RAN complex, so that Rex can return to the nucleus for a subsequent round of export. This chain is Protein Rex, found in Homo sapiens (Human).